We begin with the raw amino-acid sequence, 207 residues long: Outer-membrane lipoprotein LolB (207 aa).

The first 21 residues, 1-21 (MPMRKRHFYRLLPLASLLLAA), serve as a signal peptide directing secretion. Cys22 carries the N-palmitoyl cysteine lipid modification. The S-diacylglycerol cysteine moiety is linked to residue Cys22.

Belongs to the LolB family. Monomer.

The protein resides in the cell outer membrane. Functionally, plays a critical role in the incorporation of lipoproteins in the outer membrane after they are released by the LolA protein. This Yersinia pseudotuberculosis serotype O:1b (strain IP 31758) protein is Outer-membrane lipoprotein LolB.